A 77-amino-acid chain; its full sequence is DinI-like protein in retron Ec67 (77 aa).

This sequence belongs to the DinI family.

This Escherichia coli protein is DinI-like protein in retron Ec67.